A 453-amino-acid chain; its full sequence is mRNA cleavage and polyadenylation factor CLP1 (453 aa).

Residues E31, K70, and 146–151 contribute to the ATP site; that span reads NSGKTS.

The protein belongs to the Clp1 family. Clp1 subfamily. As to quaternary structure, component of a pre-mRNA cleavage factor complex. Interacts directly with PCF11.

Its subcellular location is the nucleus. In terms of biological role, required for endonucleolytic cleavage during polyadenylation-dependent pre-mRNA 3'-end formation. The sequence is that of mRNA cleavage and polyadenylation factor CLP1 from Scheffersomyces stipitis (strain ATCC 58785 / CBS 6054 / NBRC 10063 / NRRL Y-11545) (Yeast).